We begin with the raw amino-acid sequence, 283 residues long: Polyamine aminopropyltransferase (283 aa).

The PABS domain maps to 2-237; sequence ELWYTEEHTD…GHWLFGFASK (236 aa). Gln-31 provides a ligand contact to S-methyl-5'-thioadenosine. The spermidine site is built by His-62 and Asp-86. S-methyl-5'-thioadenosine is bound by residues Glu-106 and 137–138; that span reads DG. Asp-155 serves as the catalytic Proton acceptor. 155 to 158 lines the spermidine pocket; that stretch reads DSTD. An S-methyl-5'-thioadenosine-binding site is contributed by Pro-162.

It belongs to the spermidine/spermine synthase family. Homodimer or homotetramer.

The protein localises to the cytoplasm. The catalysed reaction is S-adenosyl 3-(methylsulfanyl)propylamine + putrescine = S-methyl-5'-thioadenosine + spermidine + H(+). Its pathway is amine and polyamine biosynthesis; spermidine biosynthesis; spermidine from putrescine: step 1/1. In terms of biological role, catalyzes the irreversible transfer of a propylamine group from the amino donor S-adenosylmethioninamine (decarboxy-AdoMet) to putrescine (1,4-diaminobutane) to yield spermidine. The chain is Polyamine aminopropyltransferase from Clostridium perfringens (strain 13 / Type A).